The primary structure comprises 240 residues: Ribosomal RNA small subunit methyltransferase G (240 aa).

S-adenosyl-L-methionine-binding positions include Gly-80, Phe-85, 103–105 (DSS), 131–132 (AE), and Arg-150.

Belongs to the methyltransferase superfamily. RNA methyltransferase RsmG family.

Its subcellular location is the cytoplasm. Functionally, specifically methylates the N7 position of a guanine in 16S rRNA. This Thermoanaerobacter sp. (strain X514) protein is Ribosomal RNA small subunit methyltransferase G.